Here is a 683-residue protein sequence, read N- to C-terminus: DNA ligase (683 aa).

Residues 36–40 (DAEYD), 85–86 (SL), and Glu119 contribute to the NAD(+) site. The N6-AMP-lysine intermediate role is filled by Lys121. Arg142, Glu179, Lys295, and Lys319 together coordinate NAD(+). Residues Cys413, Cys416, Cys431, and Cys437 each contribute to the Zn(2+) site. The BRCT domain maps to 596–683 (TETLPLSGQT…EHQAHLGGEA (88 aa)).

The protein belongs to the NAD-dependent DNA ligase family. LigA subfamily. The cofactor is Mg(2+). It depends on Mn(2+) as a cofactor.

The enzyme catalyses NAD(+) + (deoxyribonucleotide)n-3'-hydroxyl + 5'-phospho-(deoxyribonucleotide)m = (deoxyribonucleotide)n+m + AMP + beta-nicotinamide D-nucleotide.. Functionally, DNA ligase that catalyzes the formation of phosphodiester linkages between 5'-phosphoryl and 3'-hydroxyl groups in double-stranded DNA using NAD as a coenzyme and as the energy source for the reaction. It is essential for DNA replication and repair of damaged DNA. The chain is DNA ligase from Hahella chejuensis (strain KCTC 2396).